We begin with the raw amino-acid sequence, 480 residues long: Iroquois-class homeodomain protein IRX-1 (480 aa).

The segment at residues 127–189 (DPGRPKNATR…NARRRLKKEN (63 aa)) is a DNA-binding region (homeobox; TALE-type). Disordered stretches follow at residues 190–285 (KVTW…LGLV), 318–354 (SLAE…PLQH), and 401–480 (PHGP…LPSA). The span at 210 to 232 (TEGDPEKAEDDEEIDLESIDIDQ) shows a compositional bias: acidic residues. At Ser241 the chain carries Phosphoserine. The span at 254–263 (ARVAPPASAR) shows a compositional bias: low complexity. Positions 264-280 (DQSSPLSAAETLKSQDS) are enriched in polar residues. Residues 339–351 (SHASAHGPPSGSP) are compositionally biased toward low complexity.

The protein belongs to the TALE/IRO homeobox family. In terms of tissue distribution, expressed in specific and overlapping patterns with Irx1 and Irx2 in the developing and adult metanephric kidney. In the adult metanephros, renal expression is found in the loop of Henle in the S3 proximal tubule segment and in the thick ascending limb (TAL) of the distal tubule.

The protein localises to the nucleus. The sequence is that of Iroquois-class homeodomain protein IRX-1 (Irx1) from Mus musculus (Mouse).